The sequence spans 155 residues: Ribonuclease H (155 aa).

Residues 5 to 146 (DQKPVIIHTD…ADQLARDGLT (142 aa)) form the RNase H type-1 domain. D14, E52, D74, and D138 together coordinate Mg(2+). Residues 133–155 (ENERADQLARDGLTENRMKSRVK) form a disordered region.

This sequence belongs to the RNase H family. As to quaternary structure, monomer. Mg(2+) is required as a cofactor.

The protein localises to the cytoplasm. It carries out the reaction Endonucleolytic cleavage to 5'-phosphomonoester.. Its function is as follows. Endonuclease that specifically degrades the RNA of RNA-DNA hybrids. This Rhodopseudomonas palustris (strain ATCC BAA-98 / CGA009) protein is Ribonuclease H.